A 564-amino-acid polypeptide reads, in one-letter code: MPQIDWKPRSRVVTDGIEATTSRGMLRAVGMGDADWEKPQIGIASSWNEITPCNLSLDRLAQGAKEGVHSGGGYPLQFGTVSVSDGISMGHEGMHFSLVSREVIADSVETVMMAERLDGTVLLAGCDKSLPGMLMAAARLDLSAIFLYAGSIAPGWVKLSDGTEKDVTIIDSFEAVGACKAGKMSEEDLKRIECAIAPGEGACGGMYTANTMASVAEALGMSLPGSAAPPSADRRRDSFAHRSGEAVVSLLKQGITARDILTKKAFENAIAVAMAFGGSTNVVLHLLAIAREAEVDLTIDDFNRIGETVPHIGDLKPFGTYVMNDVDRHGGVPVVMKALLDAGLLHGDCLTVTGKTVAENLAEIDPPAPDGTVLRSLDNPIHPTGGLTILKGTLAPEGAVVKTAGFDAEVFEGPARVFERERAAMDALTAGRINAGDVVVICYEGPKGGPGMREMLAITATIKGAGLGKDVLLLTDGRFSGGTTGLCIGHIAPEAVDAGPIAFVRDGDLIRVDIAARSLDLLVDESELTARRDGWAPLPPRYTRGVLAKYSKLVRSAAEGAVTG.

Cys-53 contacts [2Fe-2S] cluster. Asp-85 is a binding site for Mg(2+). Cys-126 serves as a coordination point for [2Fe-2S] cluster. Mg(2+) is bound by residues Asp-127 and Lys-128. Lys-128 is modified (N6-carboxylysine). Cys-203 provides a ligand contact to [2Fe-2S] cluster. Glu-454 provides a ligand contact to Mg(2+). Catalysis depends on Ser-480, which acts as the Proton acceptor.

Belongs to the IlvD/Edd family. As to quaternary structure, homodimer. [2Fe-2S] cluster is required as a cofactor. Requires Mg(2+) as cofactor.

It catalyses the reaction (2R)-2,3-dihydroxy-3-methylbutanoate = 3-methyl-2-oxobutanoate + H2O. The enzyme catalyses (2R,3R)-2,3-dihydroxy-3-methylpentanoate = (S)-3-methyl-2-oxopentanoate + H2O. Its pathway is amino-acid biosynthesis; L-isoleucine biosynthesis; L-isoleucine from 2-oxobutanoate: step 3/4. It participates in amino-acid biosynthesis; L-valine biosynthesis; L-valine from pyruvate: step 3/4. Functions in the biosynthesis of branched-chain amino acids. Catalyzes the dehydration of (2R,3R)-2,3-dihydroxy-3-methylpentanoate (2,3-dihydroxy-3-methylvalerate) into 2-oxo-3-methylpentanoate (2-oxo-3-methylvalerate) and of (2R)-2,3-dihydroxy-3-methylbutanoate (2,3-dihydroxyisovalerate) into 2-oxo-3-methylbutanoate (2-oxoisovalerate), the penultimate precursor to L-isoleucine and L-valine, respectively. This chain is Dihydroxy-acid dehydratase, found in Leifsonia xyli subsp. xyli (strain CTCB07).